The following is a 398-amino-acid chain: NADH-ubiquinone oxidoreductase 49 kDa subunit (398 aa).

It belongs to the complex I 49 kDa subunit family.

The protein resides in the mitochondrion. The catalysed reaction is a ubiquinone + NADH + 5 H(+)(in) = a ubiquinol + NAD(+) + 4 H(+)(out). Core subunit of the mitochondrial membrane respiratory chain NADH dehydrogenase (Complex I) that is believed to belong to the minimal assembly required for catalysis. Complex I functions in the transfer of electrons from NADH to the respiratory chain. The immediate electron acceptor for the enzyme is believed to be ubiquinone. Component of the iron-sulfur (IP) fragment of the enzyme. Component of the iron-sulfur (IP) fragment of the enzyme. In Cafeteria roenbergensis (Marine flagellate), this protein is NADH-ubiquinone oxidoreductase 49 kDa subunit (NAD7).